Here is a 247-residue protein sequence, read N- to C-terminus: Neurotrophic factor BDNF precursor form (247 aa).

The N-terminal stretch at 1 to 18 is a signal peptide; the sequence is MTILFLTMVISYFGCMKA. Residues 19-128 constitute a propeptide that is removed on maturation; that stretch reads APMKEANVRG…AANMSMRVRR (110 aa). Asn121 is a glycosylation site (N-linked (GlcNAc...) asparagine). 3 cysteine pairs are disulfide-bonded: Cys141–Cys208, Cys186–Cys237, and Cys196–Cys239.

It belongs to the NGF-beta family. As to quaternary structure, monomers and homodimers. Binds to NTRK2/TRKB. Can form heterodimers with other neurotrophin family members, such as NTF3 and NTF4 (in vitro), but the physiological relevance of this is not clear. BDNF precursor form: interacts with the heterodimer formed by NGFR and SORCS2. Mature BDNF has much lower affinity for the heterodimer formed by NGFR and SORCS2. Post-translationally, N-glycosylated and glycosulfated, contrary to mature BDNF. Mature BDNF is produced by proteolytic removal of the propeptide, catalyzed by a FURIN family member. In addition, the precursor form is proteolytically cleaved within the propeptide, but this is not an obligatory intermediate for the production of mature BDNF. Can be converted into mature BDNF by plasmin (PLG).

Its subcellular location is the secreted. Functionally, important signaling molecule that activates signaling cascades downstream of NTRK2. During development, promotes the survival and differentiation of selected neuronal populations of the peripheral and central nervous systems. Participates in axonal growth, pathfinding and in the modulation of dendritic growth and morphology. Major regulator of synaptic transmission and plasticity at adult synapses in many regions of the CNS. The versatility of BDNF is emphasized by its contribution to a range of adaptive neuronal responses including long-term potentiation (LTP), long-term depression (LTD), certain forms of short-term synaptic plasticity, as well as homeostatic regulation of intrinsic neuronal excitability. In terms of biological role, important signaling molecule that activates signaling cascades downstream of NTRK2. Activates signaling cascades via the heterodimeric receptor formed by NGFR and SORCS2. Signaling via NGFR and SORCS2 plays a role in synaptic plasticity and long-term depression (LTD). Binding to NGFR and SORCS2 promotes neuronal apoptosis. Promotes neuronal growth cone collapse. The sequence is that of Neurotrophic factor BDNF precursor form (BDNF) from Ailuropoda melanoleuca (Giant panda).